Reading from the N-terminus, the 485-residue chain is Leukocyte receptor cluster member 9 (485 aa).

The C3H1-type zinc finger occupies 8–35 (SEAPAVCRFFLEGRCRFGARCRQPHPGA). Residues 212-247 (ETRTGLDSSLETPEVDGPTKETGLNGTTELEMPDPS) form a disordered region.

The protein is Leukocyte receptor cluster member 9 (Leng9) of Mus musculus (Mouse).